A 30-amino-acid chain; its full sequence is Circulin A (30 aa).

The cyclopeptide (Gly-Asn) cross-link spans 1-30; it reads GIPCGESCVWIPCISAALGCSCKNKVCYRN. 3 disulfide bridges follow: cysteine 4–cysteine 20, cysteine 8–cysteine 22, and cysteine 13–cysteine 27.

This is a cyclic peptide. In terms of tissue distribution, expressed in fruit, pedicel, root and stem but not in leaf (at protein level).

Functionally, probably participates in a plant defense mechanism. This is Circulin A from Chassalia chartacea (Chassalia curviflora).